Here is a 324-residue protein sequence, read N- to C-terminus: Antihemorrhagic factor jMSF (324 aa).

Residues 1 to 19 (MHFLVALVLLGQIIGSTLS) form the signal peptide. Cystatin fetuin-A-type domains are found at residues 22–130 (VRGD…VKCH) and 141–254 (RNCP…SDCV). Positions 23–25 (RGD) match the Cell attachment site motif. 7 disulfides stabilise this stretch: cysteine 28–cysteine 315, cysteine 85–cysteine 96, cysteine 110–cysteine 129, cysteine 143–cysteine 146, cysteine 205–cysteine 217, cysteine 230–cysteine 253, and cysteine 287–cysteine 291. A glycan (N-linked (GlcNAc...) asparagine) is linked at asparagine 204. Asparagine 282 carries an N-linked (GlcNAc...) asparagine glycan.

In terms of assembly, homodimer. Expressed by the liver.

The protein localises to the secreted. Suppress hemorrhage induced by metalloproteinases from the same venom (brevilysin-H3, -H4, -H6) and from habu venom (weak inhibition of the metalloproteinases HR2A). The non-hemorrhagic brevilysin-H2 is strongly inhibited by jMSF, whereas the brevilysin-L6 is not inhibited. Does not inhibit serine and cysteine proteases such as trypsin, chymotrypsin, thermolysin, and papain. The inhibition may occur by formation of a non-covalent complex between this protein and the proteinases at their metalloproteinase domains. In Gloydius blomhoffii (Mamushi), this protein is Antihemorrhagic factor jMSF.